The primary structure comprises 404 residues: Ubiquitin-like modifier-activating enzyme 5 (404 aa).

Serine 45 is subject to Phosphoserine. The ATP site is built by glycine 83, aspartate 104, lysine 127, asparagine 150, and asparagine 184. 2 residues coordinate Zn(2+): cysteine 226 and cysteine 229. Cysteine 250 serves as the catalytic Glycyl thioester intermediate. Positions 303 and 308 each coordinate Zn(2+). The UFM1-interacting sequence (UIS) signature appears at 334 to 346; it reads IIHEDNEWGIELV. Residues 347 to 377 form a linker region; that stretch reads SEVSEEELKNFSGPVPDLPEGITVAYTIPKK. 2 positions are modified to phosphoserine: serine 358 and serine 393. The UFC1-binding sequence (UFC) signature appears at 389-404; the sequence is DSGESLEDLMAKMKNM.

The protein belongs to the ubiquitin-activating E1 family. UBA5 subfamily. As to quaternary structure, homodimer; homodimerization is required for UFM1 activation. Interacts (via UIS motif) with UFM1; binds UFM1 via a trans-binding mechanism in which UFM1 interacts with distinct sites in both subunits of the UBA5 homodimer. Interacts (via C-terminus) with UFC1. Interacts (via UIS motif) with GABARAPL2 and, with lower affinity, with GABARAP and GABARAPL1. As to expression, widely expressed.

The protein resides in the cytoplasm. It is found in the nucleus. Its subcellular location is the endoplasmic reticulum membrane. The protein localises to the golgi apparatus. In terms of biological role, E1-like enzyme which specifically catalyzes the first step in ufmylation. Activates UFM1 by first adenylating its C-terminal glycine residue with ATP, and thereafter linking this residue to the side chain of a cysteine residue in E1, yielding a UFM1-E1 thioester and free AMP. Activates UFM1 via a trans-binding mechanism, in which UFM1 interacts with distinct sites in both subunits of the UBA5 homodimer. Trans-binding also promotes stabilization of the UBA5 homodimer, and enhances ATP-binding. Transfer of UFM1 from UBA5 to the E2-like enzyme UFC1 also takes place using a trans mechanism. Ufmylation plays a key role in various processes, such as ribosome recycling, response to DNA damage, interferon response or reticulophagy (also called ER-phagy). Ufmylation is essential for erythroid differentiation of both megakaryocytes and erythrocytes. This chain is Ubiquitin-like modifier-activating enzyme 5, found in Homo sapiens (Human).